We begin with the raw amino-acid sequence, 80 residues long: Putative membrane protein insertion efficiency factor (80 aa).

It belongs to the UPF0161 family.

It localises to the cell membrane. Its function is as follows. Could be involved in insertion of integral membrane proteins into the membrane. This Corynebacterium jeikeium (strain K411) protein is Putative membrane protein insertion efficiency factor.